The primary structure comprises 489 residues: Betaine aldehyde dehydrogenase (489 aa).

Residues Thr26 and Asp93 each coordinate K(+). Residue Gly150–Trp152 coordinates NAD(+). Lys162 acts as the Charge relay system in catalysis. An NAD(+)-binding site is contributed by Lys176–Glu179. Val180 serves as a coordination point for K(+). Position 229-232 (Gly229–Thr232) interacts with NAD(+). Leu245 contributes to the K(+) binding site. Catalysis depends on Glu251, which acts as the Proton acceptor. The NAD(+) site is built by Gly253, Cys285, and Glu386. The Nucleophile role is filled by Cys285. Cys285 bears the Cysteine sulfenic acid (-SOH) mark. Residues Lys456 and Gly459 each contribute to the K(+) site. Catalysis depends on Glu463, which acts as the Charge relay system.

The protein belongs to the aldehyde dehydrogenase family. Dimer of dimers. K(+) is required as a cofactor.

It carries out the reaction betaine aldehyde + NAD(+) + H2O = glycine betaine + NADH + 2 H(+). It participates in amine and polyamine biosynthesis; betaine biosynthesis via choline pathway; betaine from betaine aldehyde: step 1/1. Its function is as follows. Involved in the biosynthesis of the osmoprotectant glycine betaine. Catalyzes the irreversible oxidation of betaine aldehyde to the corresponding acid. This Burkholderia pseudomallei (strain 668) protein is Betaine aldehyde dehydrogenase.